The primary structure comprises 209 residues: Probable E3 ubiquitin-protein ligase NleG7 (209 aa).

The protein belongs to the NleG E3 ligase family. Post-translationally, two sizes of protein are detected in situ; only the smaller protein is secreted.

The protein localises to the secreted. It localises to the host cytoplasm. It catalyses the reaction S-ubiquitinyl-[E2 ubiquitin-conjugating enzyme]-L-cysteine + [acceptor protein]-L-lysine = [E2 ubiquitin-conjugating enzyme]-L-cysteine + N(6)-ubiquitinyl-[acceptor protein]-L-lysine.. Its function is as follows. Effector proteins function to alter host cell physiology and promote bacterial survival in host tissues. This protein is probably an E3 ubiquitin-protein ligase that interferes with the host's ubiquitination pathway and targets host proteins for proteasomal degradation. Mice infected with a strain of bacteria deleted for this gene were colonized less quickly by bacteria. The polypeptide is Probable E3 ubiquitin-protein ligase NleG7 (Citrobacter rodentium).